The chain runs to 490 residues: ATP synthase subunit beta, plastid (490 aa).

An ATP-binding site is contributed by 170 to 177; that stretch reads GGAGVGKT.

It belongs to the ATPase alpha/beta chains family. F-type ATPases have 2 components, CF(1) - the catalytic core - and CF(0) - the membrane proton channel. CF(1) has five subunits: alpha(3), beta(3), gamma(1), delta(1), epsilon(1). CF(0) has four main subunits: a(1), b(1), b'(1) and c(9-12).

It is found in the plastid thylakoid membrane. It catalyses the reaction ATP + H2O + 4 H(+)(in) = ADP + phosphate + 5 H(+)(out). In terms of biological role, produces ATP from ADP in the presence of a proton gradient across the membrane. The catalytic sites are hosted primarily by the beta subunits. This Cuscuta reflexa (Southern Asian dodder) protein is ATP synthase subunit beta, plastid.